We begin with the raw amino-acid sequence, 908 residues long: Isoleucine--tRNA ligase (908 aa).

The 'HIGH' region motif lies at 59–69 (PYANGDLHIGH). Residue Glu554 participates in L-isoleucyl-5'-AMP binding. Residues 595 to 599 (KMSKS) carry the 'KMSKS' region motif. Residue Lys598 participates in ATP binding. Zn(2+) contacts are provided by Cys882, Cys885, Cys898, and Cys901.

It belongs to the class-I aminoacyl-tRNA synthetase family. IleS type 1 subfamily. As to quaternary structure, monomer. The cofactor is Zn(2+).

It is found in the cytoplasm. The enzyme catalyses tRNA(Ile) + L-isoleucine + ATP = L-isoleucyl-tRNA(Ile) + AMP + diphosphate. In terms of biological role, catalyzes the attachment of isoleucine to tRNA(Ile). As IleRS can inadvertently accommodate and process structurally similar amino acids such as valine, to avoid such errors it has two additional distinct tRNA(Ile)-dependent editing activities. One activity is designated as 'pretransfer' editing and involves the hydrolysis of activated Val-AMP. The other activity is designated 'posttransfer' editing and involves deacylation of mischarged Val-tRNA(Ile). The protein is Isoleucine--tRNA ligase of Mesoplasma florum (strain ATCC 33453 / NBRC 100688 / NCTC 11704 / L1) (Acholeplasma florum).